The chain runs to 247 residues: Large ribosomal subunit protein uL24m (247 aa).

Residues 84 to 117 (FFRGDRIEVLVGKDKGKQGIVTQVIPERNWVIVE) form the KOW domain.

Belongs to the universal ribosomal protein uL24 family. Component of the mitochondrial ribosome large subunit (39S) which comprises a 16S rRNA and about 50 distinct proteins.

Its subcellular location is the mitochondrion. The sequence is that of Large ribosomal subunit protein uL24m (mRpL24) from Drosophila melanogaster (Fruit fly).